The sequence spans 227 residues: Probable septum site-determining protein MinC (227 aa).

Belongs to the MinC family. As to quaternary structure, interacts with MinD and FtsZ.

In terms of biological role, cell division inhibitor that blocks the formation of polar Z ring septums. Rapidly oscillates between the poles of the cell to destabilize FtsZ filaments that have formed before they mature into polar Z rings. Prevents FtsZ polymerization. This chain is Probable septum site-determining protein MinC, found in Bacillus pumilus (strain SAFR-032).